Reading from the N-terminus, the 150-residue chain is Large ribosomal subunit protein uL13 (150 aa).

Belongs to the universal ribosomal protein uL13 family. As to quaternary structure, part of the 50S ribosomal subunit.

Functionally, this protein is one of the early assembly proteins of the 50S ribosomal subunit, although it is not seen to bind rRNA by itself. It is important during the early stages of 50S assembly. The polypeptide is Large ribosomal subunit protein uL13 (Chlamydia abortus (strain DSM 27085 / S26/3) (Chlamydophila abortus)).